Here is a 446-residue protein sequence, read N- to C-terminus: Probable beta-1,4-xylosyltransferase IRX9L (446 aa).

The disordered stretch occupies residues 1–26 (MSRRNAGAMQREGSVKDWEEFDPSPS). Residues 1–85 (MSRRNAGAMQ…SRSKGMSLKR (85 aa)) are Cytoplasmic-facing. A helical; Signal-anchor for type II membrane protein membrane pass occupies residues 86-106 (AMLQLLVCFMVGIFIGFTPPF). Residues 107 to 446 (SVDLPGKIAS…RNLDAVVPIT (340 aa)) lie on the Lumenal side of the membrane. 4 N-linked (GlcNAc...) asparagine glycosylation sites follow: Asn185, Asn258, Asn361, and Asn411.

This sequence belongs to the glycosyltransferase 43 family.

The protein resides in the golgi apparatus membrane. Functionally, probable beta-1,4-xylosyltransferase involved in xylan biosynthesis in cell walls. This chain is Probable beta-1,4-xylosyltransferase IRX9L, found in Oryza sativa subsp. japonica (Rice).